A 361-amino-acid polypeptide reads, in one-letter code: Cilia- and flagella-associated protein 263 (361 aa).

This sequence belongs to the CFAP263 family. Forms a complex with CFAP184; the interaction is required for functional activity in cilia.

Its subcellular location is the cell projection. The protein resides in the cilium. In complex with CFAP263, acts as a regulator of ciliary beating that connects radial spoke 3 (RS3) to the inner dynein arm (IDA) and the nexin-dynein regulatory complex (N-DRC). The complex is positioned parallel to N-DRC and forms a connection between the arch at the base of RS3, the IDA tail and N-DRC. In Tetrahymena thermophila (strain SB210), this protein is Cilia- and flagella-associated protein 263 (CFAP263).